A 66-amino-acid chain; its full sequence is Gallinacin-8 (66 aa).

The N-terminal stretch at Met1 to Leu19 is a signal peptide. A propeptide spanning residues Gly20–Pro25 is cleaved from the precursor. 3 disulfide bridges follow: Cys31–Cys60, Cys38–Cys54, and Cys43–Cys61.

It belongs to the beta-defensin family. In terms of tissue distribution, expressed in the liver, kidney, gall bladder, testis, ovary and male and femae reproductive tracts. Expressed in the ovarian stroma and the theca and granulosa layers of the ovarian follicle.

Its subcellular location is the secreted. The protein localises to the cytoplasmic granule. Functionally, has bactericidal activity. The sequence is that of Gallinacin-8 (GAL8) from Gallus gallus (Chicken).